A 412-amino-acid chain; its full sequence is NADH-ubiquinone oxidoreductase 49 kDa subunit (412 aa).

The protein belongs to the complex I 49 kDa subunit family.

It localises to the hydrogenosome. It carries out the reaction a ubiquinone + NADH + 5 H(+)(in) = a ubiquinol + NAD(+) + 4 H(+)(out). In terms of biological role, transfer of electrons from NADH to the respiratory chain. The immediate electron acceptor for the enzyme is believed to be ubiquinone. Component of the iron-sulfur (IP) fragment of the enzyme. In Nyctotherus ovalis, this protein is NADH-ubiquinone oxidoreductase 49 kDa subunit (nad7).